A 115-amino-acid polypeptide reads, in one-letter code: Mediator of RNA polymerase II transcription subunit 22 (115 aa).

The protein belongs to the Mediator complex subunit 22 family. Component of the Mediator complex.

The protein localises to the nucleus. Its function is as follows. Component of the Mediator complex, a coactivator involved in the regulated transcription of nearly all RNA polymerase II-dependent genes. Mediator functions as a bridge to convey information from gene-specific regulatory proteins to the basal RNA polymerase II transcription machinery. Mediator is recruited to promoters by direct interactions with regulatory proteins and serves as a scaffold for the assembly of a functional preinitiation complex with RNA polymerase II and the general transcription factors. The sequence is that of Mediator of RNA polymerase II transcription subunit 22 (SRB6) from Candida albicans (strain SC5314 / ATCC MYA-2876) (Yeast).